An 881-amino-acid chain; its full sequence is MDTAEIRSRFLNHFARRGHTIVPSASLVAQDPTLLLVNAGMVPFKPYFLGDLATPWPRATSVQKVVRTVDIENVGRTARHASFFQMCGNFSFGDYFKAEAIPFAFELLVDGFGFKPDDLWATVYLDDDEAEGIWRELLPAERIQRRGKEDNFWSMGVPGPCGPCSEIYFDRGAAYGREGGPIADEERYLEVWNLVFMQYERGEGAGYDYPILRELPARNIDTGMGLERMATILQGVDNLYEIDISRPVLDLAGQLTGRRYGADPADDVRLRVVADHSRTAAMLIADGVVPSNEGRGYVLRRLLRRAVRDARLLGAREPVMSELFGAIGTAMGPIYPELVDNAETITGVAVAEEASFAETLRTGTTIFDAAVRQVRSTGAATLGGDEAFKLHDTYGFPIDLTLEMAAEAGLSVDEAGFRRLMERQRQTAKADRAARRIGNVDLSAFRPILARSGATTFTGYEELSRESGVVGLVGIADGAGLTVVGEGDEVGVVLDATPFYAESGGQEPDFGLLRFDGGEVEVLDVQRPVPELVLHRVKVRSGELRLGDRVQAEVDENRRRAVSRSHTATHLVHAAFRRALGEGATQAGSLNSPGRLRFDFHALGAVPPSVLTDVEDEINEVALRDLPVRAFVTTQEEARRLGAMALFGEKYGDAVRVVDVGDYARELCGGTHVASSAQLGAVKLLSESSISAGTRRVEGLVGIDAFRYLAREHLLVSQLSTALKARPDELADRVTDIVGRLRDAERELDRLRAAAVLAGAGALAEGAEDVGGVAVVTAEVPAGTSPDDVRLLAMDVRGRLAGRPAVVAVVKADGSSIVVVTDSGARSAGLRAGELVRNSWASLGGKGGGKPDIAQGGGGNSEMIPAVFAKLRGLVAELASR.

Zn(2+) is bound by residues His566, His570, Cys668, and His672.

This sequence belongs to the class-II aminoacyl-tRNA synthetase family. It depends on Zn(2+) as a cofactor.

Its subcellular location is the cytoplasm. It carries out the reaction tRNA(Ala) + L-alanine + ATP = L-alanyl-tRNA(Ala) + AMP + diphosphate. Its function is as follows. Catalyzes the attachment of alanine to tRNA(Ala) in a two-step reaction: alanine is first activated by ATP to form Ala-AMP and then transferred to the acceptor end of tRNA(Ala). Also edits incorrectly charged Ser-tRNA(Ala) and Gly-tRNA(Ala) via its editing domain. This is Alanine--tRNA ligase from Frankia alni (strain DSM 45986 / CECT 9034 / ACN14a).